Here is a 199-residue protein sequence, read N- to C-terminus: Holliday junction branch migration complex subunit RuvA (199 aa).

The domain I stretch occupies residues 1 to 63 (MIASVRGEVL…EDSMTLYGFS (63 aa)). The tract at residues 64–141 (DTESKDLFSL…DAVATTAGAA (78 aa)) is domain II. A flexible linker region spans residues 141–145 (ASGAV). The domain III stretch occupies residues 146-199 (VGSSIRDQIVEALEGLGFPIKQAEQATDSVLAESPEATTSVALRSALSLLGKTR).

Belongs to the RuvA family. In terms of assembly, homotetramer. Forms an RuvA(8)-RuvB(12)-Holliday junction (HJ) complex. HJ DNA is sandwiched between 2 RuvA tetramers; dsDNA enters through RuvA and exits via RuvB. An RuvB hexamer assembles on each DNA strand where it exits the tetramer. Each RuvB hexamer is contacted by two RuvA subunits (via domain III) on 2 adjacent RuvB subunits; this complex drives branch migration. In the full resolvosome a probable DNA-RuvA(4)-RuvB(12)-RuvC(2) complex forms which resolves the HJ.

Its subcellular location is the cytoplasm. In terms of biological role, the RuvA-RuvB-RuvC complex processes Holliday junction (HJ) DNA during genetic recombination and DNA repair, while the RuvA-RuvB complex plays an important role in the rescue of blocked DNA replication forks via replication fork reversal (RFR). RuvA specifically binds to HJ cruciform DNA, conferring on it an open structure. The RuvB hexamer acts as an ATP-dependent pump, pulling dsDNA into and through the RuvAB complex. HJ branch migration allows RuvC to scan DNA until it finds its consensus sequence, where it cleaves and resolves the cruciform DNA. The polypeptide is Holliday junction branch migration complex subunit RuvA (Rhodococcus erythropolis (strain PR4 / NBRC 100887)).